The chain runs to 228 residues: Phosphatidylserine decarboxylase proenzyme (228 aa).

The active-site Schiff-base intermediate with substrate; via pyruvic acid is Ser-197. Ser-197 bears the Pyruvic acid (Ser); by autocatalysis mark.

It belongs to the phosphatidylserine decarboxylase family. PSD-A subfamily. As to quaternary structure, heterodimer of a large membrane-associated beta subunit and a small pyruvoyl-containing alpha subunit. Requires pyruvate as cofactor. In terms of processing, is synthesized initially as an inactive proenzyme. Formation of the active enzyme involves a self-maturation process in which the active site pyruvoyl group is generated from an internal serine residue via an autocatalytic post-translational modification. Two non-identical subunits are generated from the proenzyme in this reaction, and the pyruvate is formed at the N-terminus of the alpha chain, which is derived from the carboxyl end of the proenzyme. The post-translation cleavage follows an unusual pathway, termed non-hydrolytic serinolysis, in which the side chain hydroxyl group of the serine supplies its oxygen atom to form the C-terminus of the beta chain, while the remainder of the serine residue undergoes an oxidative deamination to produce ammonia and the pyruvoyl prosthetic group on the alpha chain.

The protein localises to the cell membrane. The enzyme catalyses a 1,2-diacyl-sn-glycero-3-phospho-L-serine + H(+) = a 1,2-diacyl-sn-glycero-3-phosphoethanolamine + CO2. It functions in the pathway phospholipid metabolism; phosphatidylethanolamine biosynthesis; phosphatidylethanolamine from CDP-diacylglycerol: step 2/2. Its function is as follows. Catalyzes the formation of phosphatidylethanolamine (PtdEtn) from phosphatidylserine (PtdSer). In Bacteroides fragilis (strain ATCC 25285 / DSM 2151 / CCUG 4856 / JCM 11019 / LMG 10263 / NCTC 9343 / Onslow / VPI 2553 / EN-2), this protein is Phosphatidylserine decarboxylase proenzyme.